Consider the following 391-residue polypeptide: Coiled-coil domain-containing protein 85C-A (391 aa).

Coiled-coil stretches lie at residues 23 to 87 and 121 to 146; these read KCSK…ELCC and FQQK…KEII. Positions 154–212 are disordered; sequence NGAGSRSSIDSQSSLSNLNGGSATVRDVGDGSSTSSTGSAGSPDHHHSHIHKPTEGKIT. Low complexity-rich tracts occupy residues 158-175 and 183-195; these read SRSS…NGGS and DGSS…SAGS.

This sequence belongs to the CCDC85 family.

It localises to the cell junction. The protein resides in the tight junction. It is found in the adherens junction. Its function is as follows. May play a role in cell-cell adhesion and epithelium development through its interaction with proteins of the beta-catenin family. May play an important role in cortical development, especially in the maintenance of radial glia. This chain is Coiled-coil domain-containing protein 85C-A (ccdc85ca), found in Danio rerio (Zebrafish).